The following is a 191-amino-acid chain: Cathelicidin-related peptide Oh-Cath (191 aa).

Positions 1–22 are cleaved as a signal peptide; it reads MEGFFWKTLLVVGALAIGGTSS. A propeptide spanning residues 23–161 is cleaved from the precursor; the sequence is LPHKPLTYEE…DQPRRVKRFK (139 aa). Disulfide bonds link Cys81–Cys92 and Cys103–Cys120. Positions 125–151 are enriched in acidic residues; sequence EEEEQKQEEGNEEEKEVEKEEKEEDEK. Residues 125-154 are disordered; sequence EEEEQKQEEGNEEEKEVEKEEKEEDEKDQP.

Belongs to the cathelicidin family. As to expression, expressed by the venom gland.

The protein localises to the secreted. It is found in the target cell membrane. Potent antimicrobial peptide against Gram-negative (MIC=0.25 ug/ml against E.coli ATCC 25922, MIC=0.5 ug/ml against P.aeruginosa) and Gram-positive bacteria (MIC=64 ug/ml against E.faecalis, MIC=64 ug/ml against S.aureus). Adopts an amphipathic alpha helical conformation, that may allow to partition into the target membrane. Low hemolytic activities have been observed on mammalian cells. This chain is Cathelicidin-related peptide Oh-Cath, found in Ophiophagus hannah (King cobra).